The sequence spans 611 residues: tRNA uridine 5-carboxymethylaminomethyl modification enzyme MnmG (611 aa).

Residues 12 to 17 (GGGHAG), V124, and S179 each bind FAD. 271 to 285 (GPRYCPSVEDKIVRF) contacts NAD(+). FAD is bound at residue Q368.

The protein belongs to the MnmG family. In terms of assembly, homodimer. Heterotetramer of two MnmE and two MnmG subunits. It depends on FAD as a cofactor.

It is found in the cytoplasm. Its function is as follows. NAD-binding protein involved in the addition of a carboxymethylaminomethyl (cmnm) group at the wobble position (U34) of certain tRNAs, forming tRNA-cmnm(5)s(2)U34. The sequence is that of tRNA uridine 5-carboxymethylaminomethyl modification enzyme MnmG from Mycoplasma mobile (strain ATCC 43663 / 163K / NCTC 11711) (Mesomycoplasma mobile).